The following is a 377-amino-acid chain: Anhydro-N-acetylmuramic acid kinase (377 aa).

Residue 14-21 (GTSLDGVD) participates in ATP binding.

It belongs to the anhydro-N-acetylmuramic acid kinase family.

The catalysed reaction is 1,6-anhydro-N-acetyl-beta-muramate + ATP + H2O = N-acetyl-D-muramate 6-phosphate + ADP + H(+). It functions in the pathway amino-sugar metabolism; 1,6-anhydro-N-acetylmuramate degradation. Its pathway is cell wall biogenesis; peptidoglycan recycling. Functionally, catalyzes the specific phosphorylation of 1,6-anhydro-N-acetylmuramic acid (anhMurNAc) with the simultaneous cleavage of the 1,6-anhydro ring, generating MurNAc-6-P. Is required for the utilization of anhMurNAc either imported from the medium or derived from its own cell wall murein, and thus plays a role in cell wall recycling. The polypeptide is Anhydro-N-acetylmuramic acid kinase (Pasteurella multocida (strain Pm70)).